The chain runs to 149 residues: Large ribosomal subunit protein uL15 (149 aa).

The disordered stretch occupies residues 14–63; sequence ASRKRVGRGSGSGLGCTSGKGNKGQNARAGGGVRPGFEGGQMPLQRRLPK. Gly residues-rich tracts occupy residues 21–35 and 42–52; these read RGSG…GKGN and AGGGVRPGFEG.

Belongs to the universal ribosomal protein uL15 family. As to quaternary structure, part of the 50S ribosomal subunit.

In terms of biological role, binds to the 23S rRNA. This Nitratidesulfovibrio vulgaris (strain DSM 19637 / Miyazaki F) (Desulfovibrio vulgaris) protein is Large ribosomal subunit protein uL15.